Consider the following 355-residue polypeptide: Elongation factor Ts (355 aa).

The segment at 82-85 is involved in Mg(2+) ion dislocation from EF-Tu; the sequence is TDFV.

It belongs to the EF-Ts family.

The protein localises to the cytoplasm. Its function is as follows. Associates with the EF-Tu.GDP complex and induces the exchange of GDP to GTP. It remains bound to the aminoacyl-tRNA.EF-Tu.GTP complex up to the GTP hydrolysis stage on the ribosome. This Helicobacter pylori (strain G27) protein is Elongation factor Ts.